The following is a 131-amino-acid chain: Large ribosomal subunit protein bL19 (131 aa).

It belongs to the bacterial ribosomal protein bL19 family.

Functionally, this protein is located at the 30S-50S ribosomal subunit interface and may play a role in the structure and function of the aminoacyl-tRNA binding site. The protein is Large ribosomal subunit protein bL19 of Synechococcus sp. (strain CC9902).